A 181-amino-acid polypeptide reads, in one-letter code: Oligoribonuclease (181 aa).

The 164-residue stretch at 8-171 folds into the Exonuclease domain; it reads LIWIDLEMTG…DDIRESIAEL (164 aa). The active site involves Tyr129.

Belongs to the oligoribonuclease family.

It is found in the cytoplasm. 3'-to-5' exoribonuclease specific for small oligoribonucleotides. The protein is Oligoribonuclease of Vibrio vulnificus (strain CMCP6).